The chain runs to 1029 residues: Protein translocase subunit SecA (1029 aa).

Residues Gln-143, 161-165, and Asp-661 each bind ATP; that span reads GEGKT. Positions 953–1029 are disordered; that stretch reads EQEQKKSQVQ…GKKYKNCCGK (77 aa). Basic and acidic residues-rich tracts occupy residues 966 to 975 and 984 to 996; these read LVARHEKAET and PEGR…ENGK. Positions 1015, 1017, 1026, and 1027 each coordinate Zn(2+).

It belongs to the SecA family. In terms of assembly, monomer and homodimer. Part of the essential Sec protein translocation apparatus which comprises SecA, SecYEG and auxiliary proteins SecDF. Other proteins may also be involved. The cofactor is Zn(2+).

The protein localises to the cell inner membrane. Its subcellular location is the cytoplasm. The catalysed reaction is ATP + H2O + cellular proteinSide 1 = ADP + phosphate + cellular proteinSide 2.. Functionally, part of the Sec protein translocase complex. Interacts with the SecYEG preprotein conducting channel. Has a central role in coupling the hydrolysis of ATP to the transfer of proteins into and across the cell membrane, serving as an ATP-driven molecular motor driving the stepwise translocation of polypeptide chains across the membrane. This chain is Protein translocase subunit SecA, found in Chlorobium phaeobacteroides (strain BS1).